We begin with the raw amino-acid sequence, 325 residues long: Dehydrogenase/reductase SDR family member 7B (325 aa).

Residues 1 to 17 lie on the Cytoplasmic side of the membrane; it reads MVSAATRKSLLRARVMD. Residues 18–38 form a helical; Signal-anchor for type II membrane protein membrane-spanning segment; that stretch reads FITSTAILPLLLGCVGLFSLF. Over 39 to 325 the chain is Lumenal; that stretch reads KLLQWLRMRA…ARKERKSKHS (287 aa). NAD(+)-binding residues include serine 62 and leucine 64. Serine 194 serves as a coordination point for substrate. 3 residues coordinate NAD(+): tyrosine 207, lysine 211, and threonine 242. Tyrosine 207 acts as the Proton acceptor in catalysis.

The protein belongs to the short-chain dehydrogenases/reductases (SDR) family.

It is found in the endoplasmic reticulum membrane. Its function is as follows. Putative oxidoreductase. This chain is Dehydrogenase/reductase SDR family member 7B (DHRS7B), found in Bos taurus (Bovine).